Consider the following 433-residue polypeptide: 5-methylthioadenosine/S-adenosylhomocysteine deaminase (433 aa).

Residues H67 and H69 each coordinate Zn(2+). 3 residues coordinate substrate: E96, R148, and H187. Zn(2+) is bound at residue H214. Substrate is bound by residues E217 and D302. D302 is a Zn(2+) binding site.

Belongs to the metallo-dependent hydrolases superfamily. MTA/SAH deaminase family. It depends on Zn(2+) as a cofactor.

It carries out the reaction S-adenosyl-L-homocysteine + H2O + H(+) = S-inosyl-L-homocysteine + NH4(+). The catalysed reaction is S-methyl-5'-thioadenosine + H2O + H(+) = S-methyl-5'-thioinosine + NH4(+). Catalyzes the deamination of 5-methylthioadenosine and S-adenosyl-L-homocysteine into 5-methylthioinosine and S-inosyl-L-homocysteine, respectively. Is also able to deaminate adenosine. This is 5-methylthioadenosine/S-adenosylhomocysteine deaminase from Carboxydothermus hydrogenoformans (strain ATCC BAA-161 / DSM 6008 / Z-2901).